The chain runs to 268 residues: Glutamate racemase (268 aa).

Substrate contacts are provided by residues 14-15 (DS) and 46-47 (YG). Cys-78 (proton donor/acceptor) is an active-site residue. Residue 79–80 (NT) participates in substrate binding. The active-site Proton donor/acceptor is the Cys-192. 193–194 (TH) serves as a coordination point for substrate.

This sequence belongs to the aspartate/glutamate racemases family.

The catalysed reaction is L-glutamate = D-glutamate. It functions in the pathway cell wall biogenesis; peptidoglycan biosynthesis. Provides the (R)-glutamate required for cell wall biosynthesis. The chain is Glutamate racemase from Sphingopyxis alaskensis (strain DSM 13593 / LMG 18877 / RB2256) (Sphingomonas alaskensis).